The following is a 199-amino-acid chain: Pre T-cell antigen receptor alpha (199 aa).

The first 16 residues, 1 to 16 (MARTWLLLFLGLRCQA), serve as a signal peptide directing secretion. Topologically, residues 17–155 (LPSGIAGTPF…RQVLRLSVLR (139 aa)) are extracellular. A disulfide bridge connects residues Cys47 and Cys107. N-linked (GlcNAc...) asparagine glycans are attached at residues Asn67 and Asn117. Residues 117-139 (NRSTHPLQLSGEEASTDRTCPQE) form a disordered region. The helical transmembrane segment at 156–176 (LLLFKLLLLDVFLTCSRLCVL) threads the bilayer. The Cytoplasmic portion of the chain corresponds to 177–199 (AGQHLLPPPSSKQAPASTHQSWT).

Heterodimer with TCRB; disulfide linked. This heterodimer assembles with CD3 proteins into a signaling-competent pre-T-cell receptor complex. Interacts with RHBDD1. As to expression, found in CD45+ but not in the CD45- fetal liver cells.

The protein localises to the membrane. It is found in the cell membrane. Component of the pre-T-cell receptor complex (composed of PTCRA, TCRB and the CD3 complex) that has a crucial role in early T-cell development, particularly alpha-beta T cell differentiation. In Rattus norvegicus (Rat), this protein is Pre T-cell antigen receptor alpha.